Here is a 124-residue protein sequence, read N- to C-terminus: Large ribosomal subunit protein bL12 (124 aa).

This sequence belongs to the bacterial ribosomal protein bL12 family. Homodimer. Part of the ribosomal stalk of the 50S ribosomal subunit. Forms a multimeric L10(L12)X complex, where L10 forms an elongated spine to which 2 to 4 L12 dimers bind in a sequential fashion. Binds GTP-bound translation factors.

Functionally, forms part of the ribosomal stalk which helps the ribosome interact with GTP-bound translation factors. Is thus essential for accurate translation. The polypeptide is Large ribosomal subunit protein bL12 (Borreliella afzelii (strain PKo) (Borrelia afzelii)).